A 188-amino-acid polypeptide reads, in one-letter code: GTPase KRas (188 aa).

Residues Gly-10–Ala-18, Val-29–Thr-35, Ala-59–Gly-60, and Asn-116–Asp-119 each bind GTP. Residues Tyr-32–Tyr-40 carry the Effector region motif. Residues Lys-167–Met-188 are disordered. The residue at position 185 (Cys-185) is a Cysteine methyl ester. Cys-185 is lipidated: S-farnesyl cysteine. The propeptide at Ile-186–Met-188 is removed in mature form.

It belongs to the small GTPase superfamily. Ras family.

Its subcellular location is the cell membrane. The protein localises to the cytoplasm. The enzyme catalyses GTP + H2O = GDP + phosphate + H(+). With respect to regulation, alternates between an inactive form bound to GDP and an active form bound to GTP. Activated by a guanine nucleotide-exchange factor (GEF) and inactivated by a GTPase-activating protein (GAP). In terms of biological role, ras proteins bind GDP/GTP and possess intrinsic GTPase activity. Plays an important role in the regulation of cell proliferation. May play a role in promoting oncogenic events by inducing transcriptional silencing of tumor suppressor genes (TSGs). The protein is GTPase KRas (kras) of Kryptolebias marmoratus (Mangrove killifish).